The chain runs to 556 residues: Beta-hexosaminidase subunit beta (556 aa).

The N-terminal stretch at 1-42 (MELCGLGLPRPPMLLALLLATLLAAMLALLTQVALVVQVAEA) is a signal peptide. Positions 43–121 (ARAPSVSAKP…HHEPAEFQAK (79 aa)) are excised as a propeptide. Asparagine 84 carries an N-linked (GlcNAc...) asparagine glycan. Cysteines 91 and 137 form a disulfide. Residues asparagine 142, asparagine 190, and asparagine 327 are each glycosylated (N-linked (GlcNAc...) asparagine). Cystine bridges form between cysteine 309-cysteine 360 and cysteine 534-cysteine 551. Residue glutamate 355 is the Proton donor of the active site.

This sequence belongs to the glycosyl hydrolase 20 family. In terms of assembly, there are 3 forms of beta-hexosaminidase: hexosaminidase A is a heterodimer composed of one subunit alpha and one subunit beta (chain A and B); hexosaminidase B is a homodimer of two beta subunits (two chains A and B); hexosaminidase S is a homodimer of two alpha subunits. The composition of the dimer (isozyme A versus isozyme S) has a significant effect on the substrate specificity of the alpha subunit active site. Post-translationally, N-linked glycans at Asn-142 and Asn-190 consist of Man(3)-GlcNAc(2) and Man(5 to 7)-GlcNAc(2), respectively. The beta-A and beta-B chains are produced by proteolytic processing of the precursor beta chain.

It is found in the lysosome. The protein resides in the cytoplasmic vesicle. Its subcellular location is the secretory vesicle. The protein localises to the cortical granule. The catalysed reaction is Hydrolysis of terminal non-reducing N-acetyl-D-hexosamine residues in N-acetyl-beta-D-hexosaminides.. It catalyses the reaction N-acetyl-beta-D-galactosaminyl-(1-&gt;4)-beta-D-3-sulfogalactosyl-(1-&gt;4)-beta-D-glucosyl-(1&lt;-&gt;1')-ceramide + H2O = a beta-D-3-sulfogalactosyl-(1-&gt;4)-beta-D-glucosyl-(1&lt;-&gt;1')-ceramide + N-acetyl-beta-D-galactosamine. The enzyme catalyses a ganglioside GM2 (d18:1(4E)) + H2O = a ganglioside GM3 (d18:1(4E)) + N-acetyl-beta-D-galactosamine. It carries out the reaction a ganglioside GM2 + H2O = a ganglioside GM3 + N-acetyl-beta-D-galactosamine. The catalysed reaction is beta-D-GalNAc-(1-&gt;4)-alpha-L-IdoA-(1-&gt;3)-beta-D-GalNAc-4-sulfate-(1-&gt;4)-alpha-L-IdoA-(1-&gt;3)-D-GalNAc-4-sulfate + H2O = alpha-L-IdoA-(1-&gt;3)-beta-D-GalNAc-4-sulfate-(1-&gt;4)-alpha-L-IdoA-(1-&gt;3)-D-GalNAc-4-sulfate + N-acetyl-D-galactosamine. It catalyses the reaction N-acetyl-beta-D-6-sulfogalactosaminyl-(1-&gt;4)-alpha-L-iduronyl-(1-&gt;3)-N-acetyl-D-6-sulfogalactosamine + H2O = alpha-L-iduronyl-(1-&gt;3)-N-acetyl-D-6-sulfogalactosamine + N-acetyl-D-6-sulfogalactosamine. With respect to regulation, addition of GM2A stimulates the hydrolysis of sulfated glycosphingolipid SM2 and the ganglioside GM2. Functionally, hydrolyzes the non-reducing end N-acetyl-D-hexosamine and/or sulfated N-acetyl-D-hexosamine of glycoconjugates, such as the oligosaccharide moieties from proteins and neutral glycolipids, or from certain mucopolysaccharides. The isozyme B does not hydrolyze each of these substrates, however hydrolyzes efficiently neutral oligosaccharide. Only the isozyme A is responsible for the degradation of GM2 gangliosides in the presence of GM2A. During fertilization is responsible, at least in part, for the zona block to polyspermy. Present in the cortical granules of non-activated oocytes, is exocytosed during the cortical reaction in response to oocyte activation and inactivates the sperm galactosyltransferase-binding site, accounting for the block in sperm binding to the zona pellucida. This is Beta-hexosaminidase subunit beta from Homo sapiens (Human).